Reading from the N-terminus, the 58-residue chain is DNA-directed RNA polymerases I, II, and III subunit RPABC4 (58 aa).

Residues Cys-19, Cys-22, Cys-36, and Cys-39 each coordinate Zn(2+). A C4-type zinc finger spans residues 19–39 (CGECHTENEIKSRDPIRCREC).

This sequence belongs to the archaeal Rpo12/eukaryotic RPC10 RNA polymerase subunit family. As to quaternary structure, component of the RNA polymerase I (Pol I), RNA polymerase II (Pol II) and RNA polymerase III (Pol III) complexes consisting of at least 13, 12 and 17 subunits, respectively. Pol I complex consists of a ten-subunit catalytic core composed of POLR1A/RPA1, POLR1B/RPA2, POLR1C/RPAC1, POLR1D/RPAC2, POLR1H/RPA12, POLR2E/RPABC1, POLR2F/RPABC2, POLR2H/RPABC3, POLR2K/RPABC4 and POLR2L/RPABC5; a mobile stalk subunit POLR1F/RPA43 protruding from the core and additional subunits homologous to general transcription factors POLR1E/RPA49 and POLR1G/RPA34. Part of Pol I pre-initiation complex (PIC), in which Pol I core assembles with RRN3 and promoter-bound UTBF and SL1/TIF-IB complex. Pol II complex contains a ten-subunit catalytic core composed of POLR2A/RPB1, POLR2B/RPB2, POLR2C/RPB3, POLR2I/RPB9, POLR2J/RPB11, POLR2E/RPABC1, POLR2F/RPABC2, POLR2H/RPABC3, POLR2K/RPABC4 and POLR2L/RPABC5 and a mobile stalk composed of two subunits POLR2D/RPB4 and POLR2G/RPB7. Part of Pol II(G) complex, in which Pol II core associates with an additional subunit POLR2M; unlike conventional Pol II, Pol II(G) functions as a transcriptional repressor. Part of TBP-based Pol II pre-initiation complex (PIC), in which Pol II core assembles with general transcription factors and other specific initiation factors including GTF2E1, GTF2E2, GTF2F1, GTF2F2, TCEA1, ERCC2, ERCC3, GTF2H2, GTF2H3, GTF2H4, GTF2H5, GTF2A1, GTF2A2, GTF2B and TBP; this large multi-subunit PIC complex mediates DNA unwinding and targets Pol II core to the transcription start site where the first phosphodiester bond forms. Pol III complex consists of a ten-subunit catalytic core composed of POLR3A/RPC1, POLR3B/RPC2, POLR1C/RPAC1, POLR1D/RPAC2, POLR3K/RPC10, POLR2E/RPABC1, POLR2F/RPABC2, POLR2H/RPABC3, POLR2K/RPABC4 and POLR2L/RPABC5; a mobile stalk composed of two subunits POLR3H/RPC8 and CRCP/RPC9, protruding from the core and functioning primarily in transcription initiation; and additional subunits homologous to general transcription factors of the RNA polymerase II machinery, POLR3C/RPC3-POLR3F/RPC6-POLR3G/RPC7 heterotrimer required for transcription initiation and POLR3D/RPC4-POLR3E/RPC5 heterodimer involved in both transcription initiation and termination.

It localises to the nucleus. The protein localises to the nucleolus. Functionally, DNA-dependent RNA polymerase catalyzes the transcription of DNA into RNA using the four ribonucleoside triphosphates as substrates. Common component of RNA polymerases I, II and III which synthesize ribosomal RNA precursors, mRNA precursors and many functional non-coding RNAs, and a small RNAs, such as 5S rRNA and tRNAs, respectively. The polypeptide is DNA-directed RNA polymerases I, II, and III subunit RPABC4 (POLR2K) (Bos taurus (Bovine)).